Consider the following 696-residue polypeptide: Spermatogenesis-associated protein 21 (696 aa).

2 disordered regions span residues 1–301 (MDNR…AAGT) and 329–386 (LKAR…SVPT). Residues 67–86 (KGPRYRDTFKEGPSELRTQE) are compositionally biased toward basic and acidic residues. Positions 96 to 116 (KQSSWVPQEGSQELQAGQDQS) are enriched in polar residues. Residues 195-209 (GDKRPKEADVPHIRP) are compositionally biased toward basic and acidic residues. The segment covering 223-235 (DSSQEAMPPTSTV) has biased composition (polar residues). Positions 275 to 287 (EVRDIGERREPDR) are enriched in basic and acidic residues. 2 stretches are compositionally biased toward low complexity: residues 288-297 (VQQQPQKPVV) and 339-366 (SPRT…SGPS). A coiled-coil region spans residues 424-451 (EPEEQSLQKLYQNREKSEEQLTLKQEEA). The 36-residue stretch at 481–516 (VTPAQVEDALMSADVNGDGHVDFKDFLAVMTDTRRF) folds into the EF-hand domain. Ca(2+) contacts are provided by aspartate 494, asparagine 496, aspartate 498, histidine 500, and aspartate 505. Positions 646–696 (KPTNHYVQDQCTTPGLAPDIRSPFFQSRSQGNREHNSDSRKWPSSVPSRTH) are disordered. A compositionally biased stretch (basic and acidic residues) spans 676–686 (GNREHNSDSRK).

In terms of biological role, involved in the differentiation of haploid spermatids. The sequence is that of Spermatogenesis-associated protein 21 (SPATA21) from Macaca fascicularis (Crab-eating macaque).